The primary structure comprises 679 residues: Recombination repair protein 1 (679 aa).

The interval 1 to 407 (MPRVKAVKKQ…TKKAKKAETK (407 aa)) is disordered. Positions 45-55 (AKGKPRARKAT) are enriched in basic residues. Residues 106-116 (ATAEAEPEPKV) are compositionally biased toward basic and acidic residues. Phosphothreonine is present on residues Thr133 and Thr140. Ser142 carries the phosphoserine modification. 2 stretches are compositionally biased toward basic and acidic residues: residues 179–189 (EPPKQRARKEA) and 203–214 (SKEKVQKAETAA). The residue at position 258 (Ser258) is a Phosphoserine. The span at 312 to 347 (KKEGKEPAPGKKQKKSADKENGVVEEEAKPSTETKP) shows a compositional bias: basic and acidic residues. The AP endonuclease stretch occupies residues 428–679 (KICSWNVAGL…HCPITIFFNI (252 aa)). Glu461 lines the Mg(2+) pocket. The active site involves Tyr533. 3 residues coordinate Mg(2+): Asp572, Asn574, and Asp669. The active-site Proton donor/acceptor is Asp572.

The protein belongs to the DNA repair enzymes AP/ExoA family. Interacts with the zeta DNA polymerase complex; interacts (via the N-terminus) with the accessory subunit PolZ2/Rev7 and also interacts with the catalytic component PolZ1, however the interaction with PolZ1 is likely via PolZ2. Mg(2+) serves as cofactor. Mn(2+) is required as a cofactor.

The protein localises to the nucleus. It catalyses the reaction Exonucleolytic cleavage in the 3'- to 5'-direction to yield nucleoside 5'-phosphates.. Functionally, plays a role in the cellular response to oxidative stress by promoting DNA repair mechanisms such as base excision repair and possibly homologous recombination repair. Functions as an apurinic/apyrimidinic (AP) endodeoxyribonuclease in the DNA base excision repair (BER) pathway of DNA lesions induced by oxidative and alkylating agents. Likely to initiate repair of AP sites in DNA by catalyzing hydrolytic incision of the phosphodiester backbone immediately adjacent to the damage, generating a single-strand break with 5'-deoxyribose phosphate and 3'-hydroxyl ends. Has a 3'-5' exoribonuclease activity on mismatched deoxyribonucleotides at the 3' termini of nicked or gapped DNA molecules during short-patch BER. Has apurinic endonuclease and double-stranded DNA 3'-exonuclease activities and carries out single-stranded DNA renaturation in a Mg(2+)-dependent manner. Activity is more efficient in purine-rich regions of dsDNA than in pyrimidine-rich regions. The sequence is that of Recombination repair protein 1 from Drosophila melanogaster (Fruit fly).